The following is a 285-amino-acid chain: Malectin (285 aa).

A signal peptide spans 1–26 (MRRVTLHCAARLVIAALWLLVEVCRA). The Lumenal portion of the chain corresponds to 27–262 (ESGAQSLAER…TPNPYATDNS (236 aa)). Positions 71, 93, 120, 121, and 190 each coordinate a carbohydrate. The segment at 209 to 258 (KLQPHPGLEKREEEEEEEEEGEGPEGEKKSASTSPKNPVRSGPRTPNPYA) is disordered. Residues 220-232 (EEEEEEEEEGEGP) show a composition bias toward acidic residues. N-linked (GlcNAc...) asparagine glycosylation occurs at Asn-261. Residues 263–283 (SLMFPILVAFGVFIPTLFCLC) form a helical membrane-spanning segment. Residues 284 to 285 (RL) are Cytoplasmic-facing.

This sequence belongs to the malectin family.

It is found in the endoplasmic reticulum membrane. Carbohydrate-binding protein with a strong ligand preference for Glc2-N-glycan. May play a role in the early steps of protein N-glycosylation. This is Malectin from Danio rerio (Zebrafish).